The sequence spans 449 residues: Allantoinase (449 aa).

His-59, His-61, Lys-146, His-182, His-238, and Asp-311 together coordinate Zn(2+). N6-carboxylysine is present on Lys-146.

This sequence belongs to the metallo-dependent hydrolases superfamily. Allantoinase family. Homotetramer. Zn(2+) serves as cofactor. In terms of processing, carboxylation allows a single lysine to coordinate two zinc ions.

The catalysed reaction is (S)-allantoin + H2O = allantoate + H(+). It functions in the pathway nitrogen metabolism; (S)-allantoin degradation; allantoate from (S)-allantoin: step 1/1. Catalyzes the conversion of allantoin (5-ureidohydantoin) to allantoic acid by hydrolytic cleavage of the five-member hydantoin ring. In Deinococcus geothermalis (strain DSM 11300 / CIP 105573 / AG-3a), this protein is Allantoinase.